The primary structure comprises 117 residues: Large ribosomal subunit protein bL20 (117 aa).

The protein belongs to the bacterial ribosomal protein bL20 family.

Functionally, binds directly to 23S ribosomal RNA and is necessary for the in vitro assembly process of the 50S ribosomal subunit. It is not involved in the protein synthesizing functions of that subunit. The protein is Large ribosomal subunit protein bL20 of Chromohalobacter salexigens (strain ATCC BAA-138 / DSM 3043 / CIP 106854 / NCIMB 13768 / 1H11).